A 284-amino-acid chain; its full sequence is Bifunctional protein FolD 1 (284 aa).

NADP(+) is bound by residues 166–168 (GAS), S191, and I232.

It belongs to the tetrahydrofolate dehydrogenase/cyclohydrolase family. Homodimer.

The catalysed reaction is (6R)-5,10-methylene-5,6,7,8-tetrahydrofolate + NADP(+) = (6R)-5,10-methenyltetrahydrofolate + NADPH. It carries out the reaction (6R)-5,10-methenyltetrahydrofolate + H2O = (6R)-10-formyltetrahydrofolate + H(+). It participates in one-carbon metabolism; tetrahydrofolate interconversion. Catalyzes the oxidation of 5,10-methylenetetrahydrofolate to 5,10-methenyltetrahydrofolate and then the hydrolysis of 5,10-methenyltetrahydrofolate to 10-formyltetrahydrofolate. The protein is Bifunctional protein FolD 1 of Hydrogenovibrio crunogenus (strain DSM 25203 / XCL-2) (Thiomicrospira crunogena).